The chain runs to 283 residues: Bifunctional protein FolD (283 aa).

Position 166–168 (166–168 (GAS)) interacts with NADP(+).

This sequence belongs to the tetrahydrofolate dehydrogenase/cyclohydrolase family. Homodimer.

It carries out the reaction (6R)-5,10-methylene-5,6,7,8-tetrahydrofolate + NADP(+) = (6R)-5,10-methenyltetrahydrofolate + NADPH. The catalysed reaction is (6R)-5,10-methenyltetrahydrofolate + H2O = (6R)-10-formyltetrahydrofolate + H(+). Its pathway is one-carbon metabolism; tetrahydrofolate interconversion. In terms of biological role, catalyzes the oxidation of 5,10-methylenetetrahydrofolate to 5,10-methenyltetrahydrofolate and then the hydrolysis of 5,10-methenyltetrahydrofolate to 10-formyltetrahydrofolate. This chain is Bifunctional protein FolD, found in Coxiella burnetii (strain CbuK_Q154) (Coxiella burnetii (strain Q154)).